The following is a 277-amino-acid chain: Radial spoke head protein 9 homolog (277 aa).

Belongs to the flagellar radial spoke RSP9 family. In terms of assembly, component of axonemal radial spoke complexes.

Its subcellular location is the cytoplasm. The protein resides in the cytoskeleton. The protein localises to the cilium axoneme. It localises to the flagellum axoneme. It is found in the cell projection. Its subcellular location is the kinocilium. Functions as part of axonemal radial spoke complexes that play an important part in the motility of sperm and cilia. Required for motility of olfactory and neural cilia and for the structural integrity of ciliary axonemes in both 9+0 and 9+2 motile cilia. Essential for both the radial spoke head assembly and the central pair microtubule stability in ependymal motile cilia. This Danio rerio (Zebrafish) protein is Radial spoke head protein 9 homolog (rsph9).